The following is a 243-amino-acid chain: Ubiquinone/menaquinone biosynthesis C-methyltransferase UbiE (243 aa).

Residues Thr-69, Asp-90, and 116-117 contribute to the S-adenosyl-L-methionine site; that span reads DA.

This sequence belongs to the class I-like SAM-binding methyltransferase superfamily. MenG/UbiE family.

It catalyses the reaction a 2-demethylmenaquinol + S-adenosyl-L-methionine = a menaquinol + S-adenosyl-L-homocysteine + H(+). It carries out the reaction a 2-methoxy-6-(all-trans-polyprenyl)benzene-1,4-diol + S-adenosyl-L-methionine = a 5-methoxy-2-methyl-3-(all-trans-polyprenyl)benzene-1,4-diol + S-adenosyl-L-homocysteine + H(+). It participates in quinol/quinone metabolism; menaquinone biosynthesis; menaquinol from 1,4-dihydroxy-2-naphthoate: step 2/2. Its pathway is cofactor biosynthesis; ubiquinone biosynthesis. Methyltransferase required for the conversion of demethylmenaquinol (DMKH2) to menaquinol (MKH2) and the conversion of 2-polyprenyl-6-methoxy-1,4-benzoquinol (DDMQH2) to 2-polyprenyl-3-methyl-6-methoxy-1,4-benzoquinol (DMQH2). The protein is Ubiquinone/menaquinone biosynthesis C-methyltransferase UbiE of Cupriavidus pinatubonensis (strain JMP 134 / LMG 1197) (Cupriavidus necator (strain JMP 134)).